A 224-amino-acid chain; its full sequence is PKHD-type hydroxylase Sbal195_0750 (224 aa).

The Fe2OG dioxygenase domain occupies 78-176 (QFYPPLFNRY…RTAAFMWLQS (99 aa)). Histidine 96, aspartate 98, and histidine 157 together coordinate Fe cation. Arginine 167 is a 2-oxoglutarate binding site.

Fe(2+) is required as a cofactor. Requires L-ascorbate as cofactor.

The protein is PKHD-type hydroxylase Sbal195_0750 of Shewanella baltica (strain OS195).